The sequence spans 424 residues: Histidine--tRNA ligase (424 aa).

It belongs to the class-II aminoacyl-tRNA synthetase family. As to quaternary structure, homodimer.

Its subcellular location is the cytoplasm. It carries out the reaction tRNA(His) + L-histidine + ATP = L-histidyl-tRNA(His) + AMP + diphosphate + H(+). This Salmonella agona (strain SL483) protein is Histidine--tRNA ligase.